A 138-amino-acid polypeptide reads, in one-letter code: Basic phospholipase A2 homolog CTs-K49a (138 aa).

Residues 1 to 16 (MRTLWIMAVLLVVVEG) form the signal peptide. 6 disulfide bridges follow: C42–C131, C44–C60, C59–C111, C65–C138, C66–C104, and C91–C102. The tract at residues 121–133 (KKKKINLKLFCKK) is important for membrane-damaging activities in eukaryotes and bacteria; heparin-binding.

The protein belongs to the phospholipase A2 family. Group II subfamily. K49 sub-subfamily. As to expression, expressed by the venom gland.

The protein resides in the secreted. Functionally, snake venom phospholipase A2 homolog that lacks catalytic activity. It shows myotoxic and weak anticoagulant activities. A model of myotoxic mechanism has been proposed: an apo Lys49-PLA2 is activated by the entrance of a hydrophobic molecule (e.g. fatty acid) at the hydrophobic channel of the protein leading to a reorientation of a monomer. This reorientation causes a transition between 'inactive' to 'active' states, causing alignment of C-terminal and membrane-docking sites (MDoS) side-by-side and putting the membrane-disruption sites (MDiS) in the same plane, exposed to solvent and in a symmetric position for both monomers. The MDoS region stabilizes the toxin on membrane by the interaction of charged residues with phospholipid head groups. Subsequently, the MDiS region destabilizes the membrane with penetration of hydrophobic residues. This insertion causes a disorganization of the membrane, allowing an uncontrolled influx of ions (i.e. calcium and sodium), and eventually triggering irreversible intracellular alterations and cell death. The protein is Basic phospholipase A2 homolog CTs-K49a of Trimeresurus stejnegeri (Chinese green tree viper).